The sequence spans 407 residues: Putative ammonium transporter MTH_661 (407 aa).

A run of 12 helical transmembrane segments spans residues 9–29, 47–67, 70–90, 101–121, 129–149, 162–182, 196–216, 226–246, 257–277, 279–299, 312–332, and 357–377; these read AWMLISTALVILMTVPGVAMF, FVSLGIVSLLWFLFGYGLIFG, VSGIIGSHQVGISLINLGSAS, FAIFQMTFAAITVALISGAVV, WILFIPLWFALVYVPVAHWVW, FAGGIVVHITSGIAALALALV, LGYSVIGTGLLWFGWFGFNAG, ANAMIVTNTSAAAGMIGWILM, LGALSGAVAGLASITPAAGFV, IGASIVTGLVAAVICYLAVSW, VFGIHGVSGIIGTLGVGLFAV, and IGVVTVTVYTFVVTYILAMLL.

The protein belongs to the ammonia transporter channel (TC 1.A.11.2) family.

The protein resides in the cell membrane. The chain is Putative ammonium transporter MTH_661 from Methanothermobacter thermautotrophicus (strain ATCC 29096 / DSM 1053 / JCM 10044 / NBRC 100330 / Delta H) (Methanobacterium thermoautotrophicum).